The primary structure comprises 142 residues: Large ribosomal subunit protein uL13 (142 aa).

This sequence belongs to the universal ribosomal protein uL13 family. As to quaternary structure, part of the 50S ribosomal subunit.

In terms of biological role, this protein is one of the early assembly proteins of the 50S ribosomal subunit, although it is not seen to bind rRNA by itself. It is important during the early stages of 50S assembly. This Alkaliphilus metalliredigens (strain QYMF) protein is Large ribosomal subunit protein uL13.